We begin with the raw amino-acid sequence, 148 residues long: L-alanine exporter AlaE (148 aa).

Transmembrane regions (helical) follow at residues 18–38 (FALV…ISGM), 49–69 (VSIP…DAFI), 88–108 (LLAY…SVGA), and 115–135 (TAVA…GYFL).

Belongs to the AlaE exporter family.

The protein localises to the cell inner membrane. Its function is as follows. Exports L-alanine. This is L-alanine exporter AlaE from Yersinia enterocolitica subsp. palearctica serotype O:3 (strain DSM 13030 / CIP 106945 / Y11).